The following is a 360-amino-acid chain: Phospho-N-acetylmuramoyl-pentapeptide-transferase (360 aa).

The Periplasmic segment spans residues 1–25 (MLVWLAEHLVKYYSGFNVFSYLTFR). A helical transmembrane segment spans residues 26-46 (AIVSLLTALFISLWMGPRMIA). Over 47-71 (HLQKLSFGQVVRNDGPESHFSKRGT) the chain is Cytoplasmic. Residues 72–92 (PTMGGIMILTAIVISVLLWAY) form a helical membrane-spanning segment. A topological domain (periplasmic) is located at residue Pro93. A helical transmembrane segment spans residues 94–114 (SNPYVWCVLVVLVGYGVIGFV). The Cytoplasmic segment spans residues 115-131 (DDYRKVVRKDTKGLIAR). Residues 132 to 152 (WKYFWMSVIALGVAFALYLAG) traverse the membrane as a helical segment. Residues 153–167 (KDTPATQLVVPFFKD) lie on the Periplasmic side of the membrane. Residues 168–188 (VMPQLGLFYILLAYFVIVGTG) traverse the membrane as a helical segment. At 189-198 (NAVNLTDGLD) the chain is on the cytoplasmic side. A helical membrane pass occupies residues 199-219 (GLAIMPTVFVAGGFALVAWAT). The Periplasmic segment spans residues 220–235 (GNMNFASYLHIPYLRH). Residues 236-256 (AGELVIVCTAIVGAGLGFLWF) form a helical membrane-spanning segment. Topologically, residues 257-262 (NTYPAQ) are cytoplasmic. The helical transmembrane segment at 263–283 (VFMGDVGSLALGGALGIIAVL) threads the bilayer. The Periplasmic portion of the chain corresponds to 284–287 (LRQE). A helical membrane pass occupies residues 288 to 308 (FLLVIMGGVFVVETLSVILQV). Residues 309-337 (GSFKLRGQRIFRMAPIHHHYELKGWPEPR) are Cytoplasmic-facing. The helical transmembrane segment at 338-358 (VIVRFWIISLMLVLIGLATLK) threads the bilayer. Topologically, residues 359–360 (VR) are periplasmic.

Belongs to the glycosyltransferase 4 family. MraY subfamily. Mg(2+) is required as a cofactor.

It is found in the cell inner membrane. It carries out the reaction UDP-N-acetyl-alpha-D-muramoyl-L-alanyl-gamma-D-glutamyl-meso-2,6-diaminopimeloyl-D-alanyl-D-alanine + di-trans,octa-cis-undecaprenyl phosphate = di-trans,octa-cis-undecaprenyl diphospho-N-acetyl-alpha-D-muramoyl-L-alanyl-D-glutamyl-meso-2,6-diaminopimeloyl-D-alanyl-D-alanine + UMP. It functions in the pathway cell wall biogenesis; peptidoglycan biosynthesis. Catalyzes the initial step of the lipid cycle reactions in the biosynthesis of the cell wall peptidoglycan: transfers peptidoglycan precursor phospho-MurNAc-pentapeptide from UDP-MurNAc-pentapeptide onto the lipid carrier undecaprenyl phosphate, yielding undecaprenyl-pyrophosphoryl-MurNAc-pentapeptide, known as lipid I. This Shigella boydii serotype 18 (strain CDC 3083-94 / BS512) protein is Phospho-N-acetylmuramoyl-pentapeptide-transferase.